A 475-amino-acid chain; its full sequence is Tubulin gamma chain (475 aa).

Residue 142–148 participates in GTP binding; that stretch reads AGGTGSG. The disordered stretch occupies residues 455-475; that stretch reads GKQVSGEGNTSGTVDSRVGAS.

The protein belongs to the tubulin family.

It localises to the cytoplasm. It is found in the cytoskeleton. The protein localises to the microtubule organizing center. Tubulin is the major constituent of microtubules. The gamma chain is found at microtubule organizing centers (MTOC) such as the spindle poles, suggesting that it is involved in the minus-end nucleation of microtubule assembly. This chain is Tubulin gamma chain (TUBG1), found in Physcomitrium patens (Spreading-leaved earth moss).